We begin with the raw amino-acid sequence, 1270 residues long: Myosin-3 (1270 aa).

Residues 1–20 (MAVIKKGARRKDVKEPKKRS) form a disordered region. Positions 36–715 (VGVSDLTLLS…SLFALEDMRD (680 aa)) constitute a Myosin motor domain. ATP is bound at residue 129–136 (GESGAGKT). Ser357 is subject to Phosphoserine. The segment at 404–486 (SIGILDIYGF…PGILAAMNDS (83 aa)) is actin-binding. IQ domains lie at 719 to 739 (YNMA…RIDA) and 740 to 765 (AIKI…YGTK). Positions 771–961 (KERRSMSLLG…TIYVRRGHPA (191 aa)) constitute a TH1 domain. Disordered regions lie at residues 951–1015 (STIY…QKPV), 1029–1136 (YNPK…GSSS), and 1215–1270 (VQFG…DDDW). The segment covering 980 to 1000 (IKSKKSKHKSTHKHTHSHRSH) has biased composition (basic residues). Low complexity predominate over residues 1066–1078 (KKASSSHKSSSAK). Basic and acidic residues predominate over residues 1089–1098 (GVEKNKEPLK). A compositionally biased stretch (pro residues) spans 1107-1116 (PIPPPPPPMG). Residues 1118–1180 (PKDPKFEAAY…PTAYMTPYKD (63 aa)) enclose the SH3 domain. Residues 1215–1234 (VQFGSATVGPTSDNQSNPVG) show a composition bias toward polar residues. Positions 1256 to 1270 (ADDDDNDDGDDDDDW) are enriched in acidic residues.

It belongs to the TRAFAC class myosin-kinesin ATPase superfamily. Myosin family. As to quaternary structure, interacts (via myosin motor domain) with SHE4; this interaction is important for proper localization and may regulate the interaction of the motor domain with actin. Interacts (via SH3 domain) with VRP1; this interaction is required for localization to sites of polarized growth and may regulate the interaction of the tail domain with actin. Interacts (via SH3 domain) with PAN1; this interaction is important for late stages of endocytopsis. Interacts (via SH3 domain) with BBC1 and LAS17. Interacts (via C-terminal acidic tail) with ARC19 and ARC40; ARC19 and ARC40 are Arp2/3 complex subunits. Post-translationally, phosphorylation of the TEDS site (Ser-357) is required for the polarization of the actin cytoskeleton and for ligand-induced, but not for constitutive internalization of STE2. Phosphorylation probably activates the myosin-I ATPase. Ser-357 is phosphorylated by CLA4 and STE20 in vitro.

It localises to the cytoplasm. The protein localises to the cytoskeleton. It is found in the actin patch. One of two redundant type-I myosins implicated in the organization of the actin cytoskeleton. Required for proper actin cytoskeleton polarization and for the internalization step in endocytosis. At the cell cortex, assembles in patch-like structures together with proteins from the actin-polymerizing machinery and promotes actin assembly. Functions redundantly with LAS17 as actin nucleation-promoting factor (NPF) for the Arp2/3 complex. Motor domain phosphorylation by PAK kinases CLA4 and STE20 promotes CDC42-regulated actin assembly. Functions together with the NPF PAN1 in late stages of endocytosis. Motor domain phosphorylation by PDK1 kinases PKH1 and PKH2, and by SGK kinases YPK1 and YPK2, promotes ligand-induced, but not constitutive endocytosis of the G protein-coupled receptor STE2. This Saccharomyces cerevisiae (strain YJM789) (Baker's yeast) protein is Myosin-3 (MYO3).